Here is a 503-residue protein sequence, read N- to C-terminus: Betaine aldehyde dehydrogenase 2 (503 aa).

Betaine aldehyde is bound at residue 161-170 (WNYPLLMATW). Residue 238-243 (GSYETG) participates in NAD(+) binding. Betaine aldehyde is bound by residues Glu260, 292-295 (QICS), and Cys453. Residues Glu260 and Cys294 contribute to the active site. 4-aminobutanal contacts are provided by residues 260–261 (EL) and Cys294. Residue Trp459 participates in 4-aminobutanal binding. A Microbody targeting signal motif is present at residues 501–503 (SKL).

This sequence belongs to the aldehyde dehydrogenase family. As to quaternary structure, homodimer.

Its subcellular location is the peroxisome. It localises to the cytoplasm. The catalysed reaction is betaine aldehyde + NAD(+) + H2O = glycine betaine + NADH + 2 H(+). It functions in the pathway amine and polyamine biosynthesis; betaine biosynthesis via choline pathway; betaine from betaine aldehyde: step 1/1. Its function is as follows. Dehydrogenase that can use N-acetyl-c-aminobutyraldehyde (NAGABald), gamma-guanidinobutyraldehyde (GGBald), betaine aldehyde (Bet-ald), gamma-aminobutyraldehyde (GAB-ald), acetaldehyde, 4-aminobutylaldehyde (AB-ald), 3-aminopropionaldehyde (AP-ald), 4-N-trimethylaminobutyraldehyde (TMAB-ald) and 3-N-trimethylaminopropionaldehyde (TMAP-ald) as substrates. Catalyzes the oxidation of GAB-ald more efficiently than Bet-ald. Mediates the conversion of GAB-ald into gamma-aminobutyric acid (GABA), and prevents the formation of 2-acetyl-1-pyrroline (2AP) which gives fragrant rice its aromatic properties. This chain is Betaine aldehyde dehydrogenase 2 (BADH2), found in Oryza sativa subsp. indica (Rice).